The primary structure comprises 225 residues: Probable septum site-determining protein MinC (225 aa).

The tract at residues 87–112 (PTHMASPQGNSSKTRSSDTQPKPKTP) is disordered. Over residues 91 to 108 (ASPQGNSSKTRSSDTQPK) the composition is skewed to polar residues.

It belongs to the MinC family. Interacts with MinD and FtsZ.

Its function is as follows. Cell division inhibitor that blocks the formation of polar Z ring septums. Rapidly oscillates between the poles of the cell to destabilize FtsZ filaments that have formed before they mature into polar Z rings. Prevents FtsZ polymerization. The sequence is that of Probable septum site-determining protein MinC from Prochlorococcus marinus (strain MIT 9313).